Reading from the N-terminus, the 283-residue chain is Zip homologous protein 4 (283 aa).

The RING-type zinc-finger motif lies at 6-50 (CFRCYKFPSKQIEFYLTNCMHMFCIECERLCHPPEEEPLKCIQCS). Disordered regions lie at residues 149–175 (KKQL…SSRS) and 201–283 (TKAQ…RNSQ). Residues 163-175 (PRSNSLKVASSRS) show a composition bias toward polar residues. A compositionally biased stretch (low complexity) spans 202 to 216 (KAQAKAEAEAEAPAK). Over residues 220–235 (SKAQTTKCTSNYQSHP) the composition is skewed to polar residues. The segment covering 267 to 283 (KKHEAQREKHKEHRNSQ) has biased composition (basic and acidic residues).

Interacts with zhp-3; the interaction is required for their localization along paired chromosomes and stability, and for the formation of chiasma during meiotic recombination. Expressed in the germline.

It localises to the chromosome. Functionally, recruited co-dependently with zhp-3 to the synaptonemal complex between homologous chromosome pairs to regulate the formation and number of crossover events between homologs during meiotic recombination. In the early stages of pachytene, in complex with zhp-4, recruited by the zhp-1-zhp-2 heterodimer to designated crossover sites along the recombination intermediate to stabilize other pro-crossover factors such as rmh-1, msh-5 and cosa-1. This in turn facilitates crossover and promotes the formation of chiasma in each meiotic nucleus at the late pachytene stage of meiosis. Negatively regulates double strand break formation to promote formation of the crossover intermediate. This is Zip homologous protein 4 from Caenorhabditis elegans.